Consider the following 143-residue polypeptide: Nucleoside diphosphate kinase (143 aa).

Residues Lys11, Phe59, Arg87, Thr93, Arg104, and Asn114 each contribute to the ATP site. His117 (pros-phosphohistidine intermediate) is an active-site residue.

Belongs to the NDK family. Homotetramer. Requires Mg(2+) as cofactor.

The protein localises to the cytoplasm. It carries out the reaction a 2'-deoxyribonucleoside 5'-diphosphate + ATP = a 2'-deoxyribonucleoside 5'-triphosphate + ADP. It catalyses the reaction a ribonucleoside 5'-diphosphate + ATP = a ribonucleoside 5'-triphosphate + ADP. Its function is as follows. Major role in the synthesis of nucleoside triphosphates other than ATP. The ATP gamma phosphate is transferred to the NDP beta phosphate via a ping-pong mechanism, using a phosphorylated active-site intermediate. The chain is Nucleoside diphosphate kinase from Shewanella amazonensis (strain ATCC BAA-1098 / SB2B).